Consider the following 234-residue polypeptide: Probable chemoreceptor glutamine deamidase CheD (234 aa).

The protein belongs to the CheD family.

The catalysed reaction is L-glutaminyl-[protein] + H2O = L-glutamyl-[protein] + NH4(+). Its function is as follows. Probably deamidates glutamine residues to glutamate on methyl-accepting chemotaxis receptors (MCPs), playing an important role in chemotaxis. This Burkholderia mallei (strain NCTC 10247) protein is Probable chemoreceptor glutamine deamidase CheD.